The primary structure comprises 397 residues: HTH-type transcriptional regulator GalR (397 aa).

2 HTH lysR-type domains span residues 7-64 (PNLM…MRLT) and 99-156 (FQAR…LQPT). 2 DNA-binding regions (H-T-H motif) span residues 24-43 (VSRATEVLFRAQSVVTRAIA) and 116-135 (MQTVARHFGLSQPAVSAALK).

It belongs to the LysR transcriptional regulatory family.

Its function is as follows. Transcriptional regulator for the galBCD and galTAP operons, encoding genes of the gallate degradation pathway. This Pseudomonas putida (strain ATCC 47054 / DSM 6125 / CFBP 8728 / NCIMB 11950 / KT2440) protein is HTH-type transcriptional regulator GalR (galR).